The following is a 778-amino-acid chain: Phosphoribosylformylglycinamidine synthase subunit PurL (778 aa).

The active site involves H44. The ATP site is built by Y47 and K86. E88 lines the Mg(2+) pocket. Residues 89-92 (SHNH) and R111 contribute to the substrate site. Residue H90 is the Proton acceptor of the active site. Positions 112 and 265 each coordinate Mg(2+). 309 to 311 (ESQ) is a substrate binding site. The interval 455-474 (TRQPPGEGLPGRSGQAGPPK) is disordered. Residues N518 and G555 each coordinate ATP. Residue N556 coordinates Mg(2+). S558 contacts substrate.

It belongs to the FGAMS family. As to quaternary structure, monomer. Part of the FGAM synthase complex composed of 1 PurL, 1 PurQ and 2 PurS subunits.

The protein localises to the cytoplasm. It carries out the reaction N(2)-formyl-N(1)-(5-phospho-beta-D-ribosyl)glycinamide + L-glutamine + ATP + H2O = 2-formamido-N(1)-(5-O-phospho-beta-D-ribosyl)acetamidine + L-glutamate + ADP + phosphate + H(+). It functions in the pathway purine metabolism; IMP biosynthesis via de novo pathway; 5-amino-1-(5-phospho-D-ribosyl)imidazole from N(2)-formyl-N(1)-(5-phospho-D-ribosyl)glycinamide: step 1/2. Its function is as follows. Part of the phosphoribosylformylglycinamidine synthase complex involved in the purines biosynthetic pathway. Catalyzes the ATP-dependent conversion of formylglycinamide ribonucleotide (FGAR) and glutamine to yield formylglycinamidine ribonucleotide (FGAM) and glutamate. The FGAM synthase complex is composed of three subunits. PurQ produces an ammonia molecule by converting glutamine to glutamate. PurL transfers the ammonia molecule to FGAR to form FGAM in an ATP-dependent manner. PurS interacts with PurQ and PurL and is thought to assist in the transfer of the ammonia molecule from PurQ to PurL. The sequence is that of Phosphoribosylformylglycinamidine synthase subunit PurL from Symbiobacterium thermophilum (strain DSM 24528 / JCM 14929 / IAM 14863 / T).